Reading from the N-terminus, the 264-residue chain is ELL-associated factor 2 (264 aa).

2 disordered regions span residues 114-154 (EGSS…PSSP) and 169-264 (MDQL…DSDD). Residues 117–142 (SKVQSRIEQQQQQIRNSSKTPNNIKN) are compositionally biased toward polar residues. Positions 173-196 (SSSDSSSDSKSSSSSSSSSENSSS) are enriched in low complexity. Over residues 228 to 238 (VPDKDASHNRS) the composition is skewed to basic and acidic residues. Polar residues predominate over residues 239–264 (QENSGHMMNTLRSDLQLSESGSDSDD).

The protein belongs to the EAF family.

The protein localises to the nucleus speckle. May act as a transcriptional transactivator. The protein is ELL-associated factor 2 (EAF2) of Gallus gallus (Chicken).